A 586-amino-acid polypeptide reads, in one-letter code: Kelch-like protein 7 (586 aa).

The region spanning 44 to 111 is the BTB domain; sequence CDVILMVQER…AYTARISVNS (68 aa). The region spanning 146–248 is the BACK domain; the sequence is CLGISVLAEC…SKNFLSKTVQ (103 aa). Kelch repeat units lie at residues 294-336, 337-382, 383-430, 431-481, 483-528, and 530-575; these read RIAL…FWDN, VVYI…AAEG, KIYT…EANG, LIYV…FVKD, IFAV…AVGS, and IYVL…CVVD.

As to quaternary structure, homodimer. Component of the BCR(KLHL7) E3 ubiquitin ligase complex, at least composed of CUL3 and KLHL7 and RBX1.

It is found in the nucleus. The protein resides in the cytoplasm. It participates in protein modification; protein ubiquitination. In terms of biological role, substrate-specific adapter of a BCR (BTB-CUL3-RBX1) E3 ubiquitin ligase complex. The BCR(KLHL7) complex acts by mediating ubiquitination and subsequent degradation of substrate proteins. Probably mediates 'Lys-48'-linked ubiquitination. The polypeptide is Kelch-like protein 7 (Klhl7) (Rattus norvegicus (Rat)).